Consider the following 171-residue polypeptide: Co-chaperone protein HscB (171 aa).

The J domain maps to 2-74 (DYFTLFGLPA…LMRAEYLLSL (73 aa)).

It belongs to the HscB family. In terms of assembly, interacts with HscA and stimulates its ATPase activity. Interacts with IscU.

Functionally, co-chaperone involved in the maturation of iron-sulfur cluster-containing proteins. Seems to help targeting proteins to be folded toward HscA. This Shigella boydii serotype 18 (strain CDC 3083-94 / BS512) protein is Co-chaperone protein HscB.